An 83-amino-acid polypeptide reads, in one-letter code: Delta-conotoxin-like MVIC (83 aa).

A signal peptide spans 1–22 (MKLTCVMIVAVLFLTTWTFVTA). The propeptide occupies 23–49 (DDSRYGLKNLFPKARHEMKNPEASKLN). Intrachain disulfides connect C54-C69, C61-C73, and C68-C78. A 4-hydroxyproline mark is found at P56 and P65.

This sequence belongs to the conotoxin O1 superfamily. As to expression, expressed by the venom duct.

Its subcellular location is the secreted. Its function is as follows. Delta-conotoxins bind to site 6 of voltage-gated sodium channels (Nav) and inhibit the inactivation process. The chain is Delta-conotoxin-like MVIC from Conus magus (Magical cone).